The chain runs to 86 residues: Small ribosomal subunit protein bS20 (86 aa).

The protein belongs to the bacterial ribosomal protein bS20 family.

Its function is as follows. Binds directly to 16S ribosomal RNA. This is Small ribosomal subunit protein bS20 from Kocuria rhizophila (strain ATCC 9341 / DSM 348 / NBRC 103217 / DC2201).